We begin with the raw amino-acid sequence, 376 residues long: Ribonucleoside-diphosphate reductase subunit beta (376 aa).

Asp85, Glu116, and His119 together coordinate Fe cation. Residue Tyr123 is part of the active site. Fe cation is bound by residues Glu205, Glu239, and His242.

The protein belongs to the ribonucleoside diphosphate reductase small chain family. Tetramer of two alpha and two beta subunits. The cofactor is Fe cation.

It catalyses the reaction a 2'-deoxyribonucleoside 5'-diphosphate + [thioredoxin]-disulfide + H2O = a ribonucleoside 5'-diphosphate + [thioredoxin]-dithiol. Its function is as follows. Provides the precursors necessary for DNA synthesis. Catalyzes the biosynthesis of deoxyribonucleotides from the corresponding ribonucleotides. This is Ribonucleoside-diphosphate reductase subunit beta (nrdB) from Buchnera aphidicola subsp. Schizaphis graminum (strain Sg).